Reading from the N-terminus, the 467-residue chain is Programmed cell death protein 4 (467 aa).

2 disordered regions span residues 21–43 (ALFS…NGNW) and 57–124 (KAKR…VWGT). The Nuclear localization signal motif lies at 57–63 (KAKRRLR). Residues 112–123 (KKGGAGGKGVWG) show a composition bias toward gly residues. 2 consecutive MI domains span residues 161–282 (AFEK…GYKG) and 324–447 (HLVK…LCPS). Positions 446 to 452 (PSRGRKR) match the Nuclear localization signal motif.

This sequence belongs to the PDCD4 family. Interacts with EIF4A. Expressed in a broad spectrum of hematopoietic organs, such as thymus and bursa. Lower levels of expression detected in the kidney.

The protein localises to the nucleus. Its subcellular location is the cytoplasm. In terms of biological role, inhibits translation initiation and cap-dependent translation. May excert its function by hindering the interaction between EIF4A and EIF4G. Inhibits the helicase activity of EIF4A. Binds RNA. Does not seem to be involved in apoptosis. In Gallus gallus (Chicken), this protein is Programmed cell death protein 4 (PDCD4).